The following is a 307-amino-acid chain: Coproporphyrin III ferrochelatase (307 aa).

Fe-coproporphyrin III contacts are provided by residues tyrosine 12, arginine 29, 45–46 (RY), serine 53, and tyrosine 124. Fe(2+) is bound by residues histidine 181 and glutamate 263.

It belongs to the ferrochelatase family.

Its subcellular location is the cytoplasm. The catalysed reaction is Fe-coproporphyrin III + 2 H(+) = coproporphyrin III + Fe(2+). Its pathway is porphyrin-containing compound metabolism; protoheme biosynthesis. Functionally, involved in coproporphyrin-dependent heme b biosynthesis. Catalyzes the insertion of ferrous iron into coproporphyrin III to form Fe-coproporphyrin III. The protein is Coproporphyrin III ferrochelatase of Staphylococcus aureus (strain COL).